Consider the following 966-residue polypeptide: Next to BRCA1 gene 1 protein (966 aa).

The 82-residue stretch at 4–85 (QVTLNVTFKN…NQLQMQVHEG (82 aa)) folds into the PB1 domain. Residue Ser116 is modified to Phosphoserine. Residues 212–264 (SWHIACNNCQRRIVGVRYQCSLCPSYNICEDCEAGPYGHDTNHVLLKLRRPVV) form a ZZ-type zinc finger. Residues Cys217, Cys220, Cys231, Cys234, Cys240, Cys243, His250, and His254 each coordinate Zn(2+). Residues 542 to 636 (ASERELYIPS…KRKAENIASV (95 aa)) form an ATG8 family protein-binding region. Phosphothreonine; by GSK3-alpha is present on Thr586. Phosphoserine is present on residues Ser590, Ser596, and Ser625. The segment covering 699 to 718 (EAVMEEEEDEEDEEEEDELK) has biased composition (acidic residues). 3 disordered regions span residues 699–728 (EAVM…SSAS), 750–792 (MYSS…QPQE), and 848–879 (VPDQ…HHGS). An ATG8 family protein-binding region spans residues 727–738 (ASSEDYIIILPE). The UBA domain maps to 913 to 957 (SEDQTAALMAHLFEMGFCDRQLNLRLLKKHNYNILQVVTELLQLN).

In terms of assembly, homooligomer and heterooligomer. Interacts with TRIM55. Interacts with titin/TTN. Interacts with RNF29, USP8, MAP1LC3A, MAP1LC3B, MAP1LC3C, GABARAP, GABARAPL1 and GABARAPL2. Binds to ubiquitin and ubiquitinated proteins. Interacts with SQSTM1. Interacts with TAX1BP1. Interacts with IRF3; this interaction mediates autophagic degradation of IRF3. Interacts with IL12A and IL12B. As to quaternary structure, (Microbial infection) Interacts with Influenza A virus protein PB1; this interaction promotes NBR1-mediated selective autophagic degradation of MAVS. Post-translationally, (Microbial infection) Cleaved by S.pyogenes SpeB protease; leading to its degradation. Degradation by SpeB prevents autophagy, promoting to S.pyogenes intracellular replication. In terms of processing, phosphorylated by GSK3A; this phosphorylation inhibits NBR1 involvement in the formation of ubiquitinated protein aggregates.

It localises to the cytoplasm. It is found in the cytoplasmic vesicle. The protein resides in the autophagosome. The protein localises to the lysosome. Its subcellular location is the myofibril. It localises to the sarcomere. It is found in the m line. Ubiquitin-binding autophagy adapter that participates in different processes including host defense or intracellular homeostasis. Possesses a double function during the selective autophagy by acting as a shuttle bringing ubiquitinated proteins to autophagosomes and also by participating in the formation of protein aggregates. Plays a role in the regulation of the innate immune response by modulating type I interferon production and targeting ubiquitinated IRF3 for autophagic degradation. In response to oxidative stress, promotes an increase in SQSTM1 levels, phosphorylation, and body formation by preventing its autophagic degradation. In turn, activates the KEAP1-NRF2/NFE2L2 antioxidant pathway. Also plays non-autophagy role by mediating the shuttle of IL-12 to late endosome for subsequent secretion. The chain is Next to BRCA1 gene 1 protein (NBR1) from Homo sapiens (Human).